Here is a 128-residue protein sequence, read N- to C-terminus: Aspartate 1-decarboxylase (128 aa).

Residue Ser-25 is the Schiff-base intermediate with substrate; via pyruvic acid of the active site. Ser-25 is modified (pyruvic acid (Ser)). Thr-57 contacts substrate. Residue Tyr-58 is the Proton donor of the active site. Position 73–75 (73–75 (GSA)) interacts with substrate.

The protein belongs to the PanD family. In terms of assembly, heterooctamer of four alpha and four beta subunits. It depends on pyruvate as a cofactor. Post-translationally, is synthesized initially as an inactive proenzyme, which is activated by self-cleavage at a specific serine bond to produce a beta-subunit with a hydroxyl group at its C-terminus and an alpha-subunit with a pyruvoyl group at its N-terminus.

It is found in the cytoplasm. The enzyme catalyses L-aspartate + H(+) = beta-alanine + CO2. It functions in the pathway cofactor biosynthesis; (R)-pantothenate biosynthesis; beta-alanine from L-aspartate: step 1/1. Functionally, catalyzes the pyruvoyl-dependent decarboxylation of aspartate to produce beta-alanine. This chain is Aspartate 1-decarboxylase, found in Burkholderia lata (strain ATCC 17760 / DSM 23089 / LMG 22485 / NCIMB 9086 / R18194 / 383).